Reading from the N-terminus, the 307-residue chain is Olfactory receptor 5AC1 (307 aa).

Topologically, residues 1 to 28 (MAEENKILVTHFVLTGLTDHPGLQAPLF) are extracellular. Residues 29 to 49 (LVFLVIYLITLVGNLGLMALI) traverse the membrane as a helical segment. Topologically, residues 50–56 (WKDPHLH) are cytoplasmic. The helical transmembrane segment at 57-77 (TPIYLFLGSLAFADACTSSSV) threads the bilayer. At 78-99 (TSKMLINFLSKNHMLSMAKCAT) the chain is on the extracellular side. A disulfide bridge connects residues Cys-97 and Cys-179. A helical membrane pass occupies residues 100–120 (QFYFFGSNATTECFLLVVMAY). Over 121-143 (DRYVAICNPLLYPVVMSNSLCTQ) the chain is Cytoplasmic. Residues 144–164 (FIGISYFIGFLHSAIHVGLLF) form a helical membrane-spanning segment. The Extracellular portion of the chain corresponds to 165-195 (RLTFCRSNIIHYFYCEILQLFKISCTNPTVN). The helical transmembrane segment at 196–216 (ILLIFIFSAFIQVFTFMTLIV) threads the bilayer. The Cytoplasmic portion of the chain corresponds to 217–239 (SYSYILSAILKKKSEKGRSKAFS). The chain crosses the membrane as a helical span at residues 240 to 260 (TCSAHLLSVSLFYGTLFFMYV). The Extracellular portion of the chain corresponds to 261–271 (SSRSGSAADQA). A helical membrane pass occupies residues 272-292 (KMYSLFYTIIIPLLNPFIYSL). Residues 293 to 307 (RNKEVIDALRRIMKK) are Cytoplasmic-facing.

This sequence belongs to the G-protein coupled receptor 1 family.

It localises to the cell membrane. Its function is as follows. Odorant receptor. The protein is Olfactory receptor 5AC1 (OR5AC1) of Homo sapiens (Human).